Here is a 510-residue protein sequence, read N- to C-terminus: Cytochrome c-552 (510 aa).

A signal peptide spans 1-50 (MVVFLFILYRQSDLKFKSMNGVIIVNTLKKRLFVATTMIWGLSVTLPVLA). H124 is a binding site for heme c. Positions 152, 155, and 156 each coordinate heme. Heme c is bound by residues C190, C193, H194, C239, C242, and H243. E245, Y246, K291, and Q293 together coordinate Ca(2+). Y246 serves as a coordination point for substrate. Position 294 (H294) interacts with substrate. Residues H305, C312, C315, H316, H331, C344, C347, H348, and H423 each contribute to the heme c site.

Belongs to the cytochrome c-552 family. Requires Ca(2+) as cofactor. Heme c serves as cofactor.

Its subcellular location is the periplasm. It carries out the reaction 6 Fe(III)-[cytochrome c] + NH4(+) + 2 H2O = 6 Fe(II)-[cytochrome c] + nitrite + 8 H(+). It participates in nitrogen metabolism; nitrate reduction (assimilation). In terms of biological role, catalyzes the reduction of nitrite to ammonia, consuming six electrons in the process. The polypeptide is Cytochrome c-552 (Pasteurella multocida (strain Pm70)).